Consider the following 152-residue polypeptide: MTHDHKLKVEAIKRGTVIDHIPAQVGFKILSLFRLTETDERITVGFNLPSENLGKKDLIKIENVFLTAEQANRLAMYAPQATVNIIDDYQVVNKMALSLPELLEDVVPCPNSNCISHNEPVQSSFRVKKFASDVVLTCKYCEKEFERHAVIR.

Zn(2+) contacts are provided by C109, C114, C138, and C141.

This sequence belongs to the PyrI family. Contains catalytic and regulatory chains. Zn(2+) is required as a cofactor.

Functionally, involved in allosteric regulation of aspartate carbamoyltransferase. The protein is Aspartate carbamoyltransferase regulatory chain of Proteus mirabilis (strain HI4320).